The sequence spans 281 residues: Glyoxalase 1 (281 aa).

VOC domains follow at residues 4-127 and 132-251; these read RALH…IGKA and KVLR…FVGD.

The protein belongs to the glyoxalase I family.

Functionally, thought to act as a glyoxalase. May remove methylglyoxal from mitochondrial proteins. Has roles in reducing oxidative stress and increasing lifespan. The protein is Glyoxalase 1 of Caenorhabditis briggsae.